The sequence spans 68 residues: Probable tautomerase HP_0924 (68 aa).

Catalysis depends on proline 2, which acts as the Proton acceptor; via imino nitrogen.

Belongs to the 4-oxalocrotonate tautomerase family.

This chain is Probable tautomerase HP_0924, found in Helicobacter pylori (strain ATCC 700392 / 26695) (Campylobacter pylori).